Consider the following 210-residue polypeptide: Probable septum site-determining protein MinC (210 aa).

This sequence belongs to the MinC family. Interacts with MinD and FtsZ.

In terms of biological role, cell division inhibitor that blocks the formation of polar Z ring septums. Rapidly oscillates between the poles of the cell to destabilize FtsZ filaments that have formed before they mature into polar Z rings. Prevents FtsZ polymerization. The polypeptide is Probable septum site-determining protein MinC (Clostridium novyi (strain NT)).